A 198-amino-acid chain; its full sequence is Ribonuclease HII (198 aa).

One can recognise an RNase H type-2 domain in the interval 2 to 191; that stretch reads VLECGVDETG…IRELLVGKDN (190 aa). 3 residues coordinate a divalent metal cation: aspartate 8, glutamate 9, and aspartate 100.

Belongs to the RNase HII family. Requires Mn(2+) as cofactor. The cofactor is Mg(2+).

It is found in the cytoplasm. It carries out the reaction Endonucleolytic cleavage to 5'-phosphomonoester.. Endonuclease that specifically degrades the RNA of RNA-DNA hybrids. In Desulforamulus reducens (strain ATCC BAA-1160 / DSM 100696 / MI-1) (Desulfotomaculum reducens), this protein is Ribonuclease HII.